Reading from the N-terminus, the 827-residue chain is Periplasmic nitrate reductase (827 aa).

Residues 1-32 constitute a signal peptide (tat-type signal); the sequence is MELNRRDFMKANAAAAAALAAGITLPVKNVYA. Positions 37-93 constitute a 4Fe-4S Mo/W bis-MGD-type domain; the sequence is IKWDKAPCRFCGTGCSVLVGTQNGRMVASQGDPDAEVNRGLNCIKGYFLPKIIYGKD. Positions 44, 47, 51, and 79 each coordinate [4Fe-4S] cluster. Mo-bis(molybdopterin guanine dinucleotide)-binding positions include Lys81, Gln148, Asn173, Cys177, 210-217, 241-245, Met371, Gln375, Asn481, 507-508, Lys530, Asp557, and 717-726; these read WGSNMAEM, STFEH, SD, and TGRVLEHWHS. Phe793 contacts substrate. 2 residues coordinate Mo-bis(molybdopterin guanine dinucleotide): Asn801 and Lys818.

Belongs to the prokaryotic molybdopterin-containing oxidoreductase family. NasA/NapA/NarB subfamily. In terms of assembly, component of the periplasmic nitrate reductase NapAB complex composed of NapA and NapB. [4Fe-4S] cluster serves as cofactor. Requires Mo-bis(molybdopterin guanine dinucleotide) as cofactor. Post-translationally, predicted to be exported by the Tat system. The position of the signal peptide cleavage has not been experimentally proven.

Its subcellular location is the periplasm. It carries out the reaction 2 Fe(II)-[cytochrome] + nitrate + 2 H(+) = 2 Fe(III)-[cytochrome] + nitrite + H2O. Functionally, catalytic subunit of the periplasmic nitrate reductase complex NapAB. Receives electrons from NapB and catalyzes the reduction of nitrate to nitrite. The chain is Periplasmic nitrate reductase from Glaesserella parasuis serovar 5 (strain SH0165) (Haemophilus parasuis).